Here is a 237-residue protein sequence, read N- to C-terminus: Proteasome subunit alpha type-5 (237 aa).

It belongs to the peptidase T1A family. As to quaternary structure, the 26S proteasome consists of a 20S proteasome core and two 19S regulatory subunits. The 20S proteasome core is composed of 28 subunits that are arranged in four stacked rings, resulting in a barrel-shaped structure. The two end rings are each formed by seven alpha subunits, and the two central rings are each formed by seven beta subunits. The catalytic chamber with the active sites is on the inside of the barrel.

It is found in the cytoplasm. The protein localises to the nucleus. The proteasome is a multicatalytic proteinase complex which is characterized by its ability to cleave peptides with Arg, Phe, Tyr, Leu, and Glu adjacent to the leaving group at neutral or slightly basic pH. The proteasome has an ATP-dependent proteolytic activity. The chain is Proteasome subunit alpha type-5 (PAE1) from Oryza sativa subsp. japonica (Rice).